Consider the following 883-residue polypeptide: NF-X1-type zinc finger protein NFXL2 (883 aa).

A compositionally biased stretch (polar residues) spans 1–10; sequence MTNMAGTATT. Residues 1 to 44 are disordered; the sequence is MTNMAGTATTEFRWKSPPQPPSQEQPISDSDSDSGSDSENHQHR. An RING-type; degenerate zinc finger spans residues 87–152; sequence CLICLERIKR…EAVWNCPKCR (66 aa). 11 NF-X1-type zinc fingers span residues 198–216, 250–269, 303–322, 357–377, 410–429, 437–456, 494–515, 523–568, 605–636, 646–664, and 709–738; these read CGHC…SCPK, CNIH…PCRE, CGKH…LCPY, CGYH…TCRI, CARH…PCSE, CRNH…PCPI, CRHG…PCRL, CGHK…RCPE, CGNH…KCDL, CQHP…PCKT, and CTHL…RCKC. The disordered stretch occupies residues 798 to 824; the sequence is EIEEKEEPSGKNASKRRKRRGRGQDIQ. A helical membrane pass occupies residues 841–863; the sequence is MVVMLVAMLAAVSYYGYKGLLWL.

Belongs to the NFX1 family. Interacts with ADO1/ZTL. In terms of tissue distribution, constitutively expressed in mesophyll and guard cells.

It localises to the nucleus. The protein localises to the membrane. The protein operates within protein modification; protein ubiquitination. Its function is as follows. Probable transcriptional regulator. May mediate E2- or E3-dependent ubiquitination. Required to gate light sensitivity during the night. Regulates the speed of the clock by acting in the feedback loop between CCA1, LHY and APRR1/TOC1. Promotes the expression of CCA1 at night but not by days. This activational effect is enhanced by interaction with ADO1/ZTL. Association with ADO1/ZTL is not leading to the degradation of NFXL2. Confers sensitivity to osmotic stress such as high salinity. Prevents H(2)O(2) production and abscisic acid accumulation. Part of a regulatory network that integrates the biosynthesis and action of abscisic acid, reactive oxygen species and cuticle components. In Arabidopsis thaliana (Mouse-ear cress), this protein is NF-X1-type zinc finger protein NFXL2 (NFXL2).